The primary structure comprises 750 residues: Methylmalonyl-CoA mutase, mitochondrial (750 aa).

The N-terminal 32 residues, 1–32, are a transit peptide targeting the mitochondrion; it reads MLRAKNQLFLLSPHYLRQVKESSGSRLIQQRL. Malonyl-CoA is bound at residue Gln50. N6-acetyllysine is present on Lys89. Malonyl-CoA contacts are provided by residues 96-99 and 106-110; these read YPTM and TIRQY. Residue Lys212 is modified to N6-acetyllysine. Residues 216–218, Arg228, Lys255, His265, and 304–306 each bind malonyl-CoA; these read TIQ and RLS. Lys335 bears the N6-acetyllysine mark. Lys343 is modified (N6-succinyllysine). Ser481 bears the Phosphoserine mark. Lys595 is modified (N6-succinyllysine). An N6-acetyllysine modification is found at Lys602. The B12-binding domain occupies 614–746; it reads RPRLLVAKMG…DDIEKCLEKK (133 aa). His627 lines the adenosylcob(III)alamin pocket.

The protein belongs to the methylmalonyl-CoA mutase family. As to quaternary structure, homodimer. Interacts (the apoenzyme form) with MMAA; the interaction is GTP dependent. Adenosylcob(III)alamin serves as cofactor.

The protein localises to the mitochondrion matrix. It is found in the mitochondrion. Its subcellular location is the cytoplasm. The enzyme catalyses (R)-methylmalonyl-CoA = succinyl-CoA. Its activity is regulated as follows. Inhibited by itaconyl-CoA, a metabolite that inactivates the coenzyme B12 cofactor. Catalyzes the reversible isomerization of methylmalonyl-CoA (MMCoA) (generated from branched-chain amino acid metabolism and degradation of dietary odd chain fatty acids and cholesterol) to succinyl-CoA (3-carboxypropionyl-CoA), a key intermediate of the tricarboxylic acid cycle. This is Methylmalonyl-CoA mutase, mitochondrial (MMUT) from Bos taurus (Bovine).